A 205-amino-acid polypeptide reads, in one-letter code: Mitochondrial ATP-independent inner membrane protease subunit 2 (205 aa).

Residues glutamate 59 and arginine 104 contribute to the active site.

The protein belongs to the peptidase S26 family. IMP1 subfamily. As to quaternary structure, heterodimer of 2 subunits, IMP1A/B and IMP12.

It is found in the mitochondrion inner membrane. Its function is as follows. Catalyzes the removal of transit peptides required for the targeting of proteins from the mitochondrial matrix, across the inner membrane, into the inter-membrane space. This Arabidopsis thaliana (Mouse-ear cress) protein is Mitochondrial ATP-independent inner membrane protease subunit 2.